The primary structure comprises 198 residues: Small ribosomal subunit protein eS1 (198 aa).

This sequence belongs to the eukaryotic ribosomal protein eS1 family.

The protein is Small ribosomal subunit protein eS1 of Methanospirillum hungatei JF-1 (strain ATCC 27890 / DSM 864 / NBRC 100397 / JF-1).